Here is a 269-residue protein sequence, read N- to C-terminus: Ribosomal RNA small subunit methyltransferase A (269 aa).

Positions 18, 20, 45, 66, 91, and 112 each coordinate S-adenosyl-L-methionine.

Belongs to the class I-like SAM-binding methyltransferase superfamily. rRNA adenine N(6)-methyltransferase family. RsmA subfamily.

The protein resides in the cytoplasm. The enzyme catalyses adenosine(1518)/adenosine(1519) in 16S rRNA + 4 S-adenosyl-L-methionine = N(6)-dimethyladenosine(1518)/N(6)-dimethyladenosine(1519) in 16S rRNA + 4 S-adenosyl-L-homocysteine + 4 H(+). Functionally, specifically dimethylates two adjacent adenosines (A1518 and A1519) in the loop of a conserved hairpin near the 3'-end of 16S rRNA in the 30S particle. May play a critical role in biogenesis of 30S subunits. This is Ribosomal RNA small subunit methyltransferase A from Vibrio parahaemolyticus serotype O3:K6 (strain RIMD 2210633).